A 427-amino-acid chain; its full sequence is Serine hydroxymethyltransferase (427 aa).

Residues Leu124 and 128-130 (GHL) contribute to the (6S)-5,6,7,8-tetrahydrofolate site. Lys233 is modified (N6-(pyridoxal phosphate)lysine).

This sequence belongs to the SHMT family. In terms of assembly, homodimer. The cofactor is pyridoxal 5'-phosphate.

It localises to the cytoplasm. The enzyme catalyses (6R)-5,10-methylene-5,6,7,8-tetrahydrofolate + glycine + H2O = (6S)-5,6,7,8-tetrahydrofolate + L-serine. It functions in the pathway one-carbon metabolism; tetrahydrofolate interconversion. The protein operates within amino-acid biosynthesis; glycine biosynthesis; glycine from L-serine: step 1/1. Catalyzes the reversible interconversion of serine and glycine with tetrahydrofolate (THF) serving as the one-carbon carrier. This reaction serves as the major source of one-carbon groups required for the biosynthesis of purines, thymidylate, methionine, and other important biomolecules. Also exhibits THF-independent aldolase activity toward beta-hydroxyamino acids, producing glycine and aldehydes, via a retro-aldol mechanism. This Acidothermus cellulolyticus (strain ATCC 43068 / DSM 8971 / 11B) protein is Serine hydroxymethyltransferase.